The chain runs to 172 residues: Small ribosomal subunit protein uS5 (172 aa).

An S5 DRBM domain is found at 16-79 (LKDRLVAINR…EAAKKNLIRV (64 aa)).

Belongs to the universal ribosomal protein uS5 family. As to quaternary structure, part of the 30S ribosomal subunit. Contacts proteins S4 and S8.

Functionally, with S4 and S12 plays an important role in translational accuracy. Its function is as follows. Located at the back of the 30S subunit body where it stabilizes the conformation of the head with respect to the body. The sequence is that of Small ribosomal subunit protein uS5 from Porphyromonas gingivalis (strain ATCC BAA-308 / W83).